The following is a 274-amino-acid chain: NH(3)-dependent NAD(+) synthetase (274 aa).

Residue 46 to 53 (GISGGQDS) coordinates ATP. Asp-52 is a Mg(2+) binding site. Residue Arg-140 participates in deamido-NAD(+) binding. An ATP-binding site is contributed by Thr-160. Residue Glu-165 participates in Mg(2+) binding. Residues Lys-173 and Asp-180 each coordinate deamido-NAD(+). ATP-binding residues include Lys-189 and Thr-211. 260–261 (HK) contacts deamido-NAD(+).

Belongs to the NAD synthetase family. As to quaternary structure, homodimer.

It carries out the reaction deamido-NAD(+) + NH4(+) + ATP = AMP + diphosphate + NAD(+) + H(+). The protein operates within cofactor biosynthesis; NAD(+) biosynthesis; NAD(+) from deamido-NAD(+) (ammonia route): step 1/1. Its function is as follows. Catalyzes the ATP-dependent amidation of deamido-NAD to form NAD. Uses ammonia as a nitrogen source. The polypeptide is NH(3)-dependent NAD(+) synthetase (Streptococcus equi subsp. zooepidemicus (strain MGCS10565)).